The sequence spans 394 residues: Flagellin A (394 aa).

It belongs to the bacterial flagellin family.

It localises to the secreted. The protein localises to the bacterial flagellum. Flagellin is the subunit protein which polymerizes to form the filaments of bacterial flagella. Homomer of FlaA is able to form a functional filament. The polypeptide is Flagellin A (flaA) (Rhizobium meliloti (strain 1021) (Ensifer meliloti)).